The primary structure comprises 380 residues: Shaggy-related protein kinase eta (380 aa).

Positions 40–324 (YMAERVVGTG…ALEACAHPFF (285 aa)) constitute a Protein kinase domain. ATP contacts are provided by residues 46–54 (VGTGSFGIV) and Lys69. Position 104 is a phosphothreonine (Thr104). Ser105 is modified (phosphoserine). Asp165 acts as the Proton acceptor in catalysis. At Ser187 the chain carries Phosphoserine. Tyr200 carries the post-translational modification Phosphotyrosine. Residues Thr220 and Thr261 each carry the phosphothreonine modification. Ser310 is modified (phosphoserine). Position 314 is a phosphothreonine (Thr314). Residue Ser353 is modified to Phosphoserine.

This sequence belongs to the protein kinase superfamily. CMGC Ser/Thr protein kinase family. GSK-3 subfamily. In terms of assembly, interacts in vitro with the C-terminal fragment of BZR1 and with BES1/BZR2, but not through the kinase domain. Interacts with BHLH150, beet curly top virus AL4/C4 and tomato golden mosaic virus AL4/AC4. Interacts with YDA. Interacts with MKK4. Interacts with KIB1 and KIB2 in a brassinosteroid (BR)-dependent manner. Interacts with BSK1, BSK6, BSK8 and BSK11. Binds to WRKY46, WRKY54 and WRKY70. Component of a complex made of POLAR, BASL, ASK7/BIN2 and ASK3/SK12. Binds to POLAR and BASL. Post-translationally, autophosphorylated mainly on threonine and serine residues. Ubiquitination and subsequent proteasomal degradation mediated by KIB1. As to expression, in the two outer cell layers of the developing seed coat and restricted to the suspensor cells in developing embryos. Mostly expressed in stomatal lineage cells with asymmetric cell division (ACD) potential. Observed in small cells of non-protruding hypocotyl cell files and of developing cotyledon epidermis.

It localises to the cytoplasm. It is found in the cell cortex. The protein localises to the nucleus. The protein resides in the cell membrane. It carries out the reaction L-seryl-[protein] + ATP = O-phospho-L-seryl-[protein] + ADP + H(+). The enzyme catalyses L-threonyl-[protein] + ATP = O-phospho-L-threonyl-[protein] + ADP + H(+). Inactivated by an unknown mechanism after binding of brassinosteroids to the brassinosteroid receptor complex. Inhibited by lithium. Inhibited by dephosphorylation at Tyr-200 by BSU1. Competitive inhibition by KIB1 that reduces substrate (e.g. BZR1) access. Repressed by bikinin. Its function is as follows. Negative regulator in brassinosteroid signal transduction pathway important for plant growth. May be also involved in auxin signaling pathway. Phosphorylates and increases the degradation of BZR1 and BZR2/BES1 by the proteasome. Phosphorylates BHLH150, beet curly top virus C4 and tomato golden mosaic virus AC4 on threonine and serine residues. Upon brassinosteroid signaling, inhibits stomatal development by phosphorylating and inhibiting the MAPKK kinase YDA and the MAPK kinases MKK4 and MKK5. Phosphorylates BSK1, BSK3, BSK5, BSK6, BSK8 and BSK11 in vitro. Phoyphorylates and destabilizes WRKY46, WRKY54 and WRKY70. Mediates BASL nuclear exclusion; kinase activity is required for this function. Required first at the cortical polarity site, to restrict MAPK signaling and promote asymmetric cell division (ACD), and second in the nucleus of stomatal lineage ground cells (SLGCs) or meristemoids, to limit cell division and to promote differentiation into pavement or stomatal guard cells, respectively, likely by initiating BASL polarization. Phosphorylates BASL, YDA and SPCH in vitro and POLAR in vivo. Phosphorylates and inhibits SPCH in the nucleus of SLGC undergoing ACD, thus negatively regulating stomatal development. The sequence is that of Shaggy-related protein kinase eta from Arabidopsis thaliana (Mouse-ear cress).